The primary structure comprises 554 residues: DNA ligase (554 aa).

Glu253 lines the ATP pocket. Lys255 acts as the N6-AMP-lysine intermediate in catalysis. Residues Arg260, Arg275, Glu304, Phe344, Arg418, and Lys424 each coordinate ATP.

This sequence belongs to the ATP-dependent DNA ligase family. Mg(2+) is required as a cofactor.

The enzyme catalyses ATP + (deoxyribonucleotide)n-3'-hydroxyl + 5'-phospho-(deoxyribonucleotide)m = (deoxyribonucleotide)n+m + AMP + diphosphate.. Functionally, DNA ligase that seals nicks in double-stranded DNA during DNA replication, DNA recombination and DNA repair. This is DNA ligase from Haloarcula marismortui (strain ATCC 43049 / DSM 3752 / JCM 8966 / VKM B-1809) (Halobacterium marismortui).